Here is a 138-residue protein sequence, read N- to C-terminus: Ribosome-binding factor A (138 aa).

A disordered region spans residues 119 to 138 (DMDEKKNSDEKRDSDEKLED).

It belongs to the RbfA family. Monomer. Binds 30S ribosomal subunits, but not 50S ribosomal subunits or 70S ribosomes.

The protein resides in the cytoplasm. Functionally, one of several proteins that assist in the late maturation steps of the functional core of the 30S ribosomal subunit. Associates with free 30S ribosomal subunits (but not with 30S subunits that are part of 70S ribosomes or polysomes). Required for efficient processing of 16S rRNA. May interact with the 5'-terminal helix region of 16S rRNA. In Alkaliphilus metalliredigens (strain QYMF), this protein is Ribosome-binding factor A.